Reading from the N-terminus, the 237-residue chain is Uridylate kinase (237 aa).

11-14 (KLSG) is an ATP binding site. A UMP-binding site is contributed by Gly53. The ATP site is built by Gly54 and Arg58. Residues Asp73 and 134 to 141 (TGNPFFTT) contribute to the UMP site. Residues Thr161, Tyr167, and Asp170 each coordinate ATP.

The protein belongs to the UMP kinase family. As to quaternary structure, homohexamer.

It localises to the cytoplasm. It catalyses the reaction UMP + ATP = UDP + ADP. The protein operates within pyrimidine metabolism; CTP biosynthesis via de novo pathway; UDP from UMP (UMPK route): step 1/1. Its activity is regulated as follows. Inhibited by UTP. Functionally, catalyzes the reversible phosphorylation of UMP to UDP. In Burkholderia vietnamiensis (strain G4 / LMG 22486) (Burkholderia cepacia (strain R1808)), this protein is Uridylate kinase.